A 305-amino-acid chain; its full sequence is Ribonuclease BN (305 aa).

Residues His63, His65, Asp67, His68, His141, Asp212, and His270 each contribute to the Zn(2+) site. The active-site Proton acceptor is Asp67.

The protein belongs to the RNase Z family. RNase BN subfamily. Homodimer. The cofactor is Zn(2+).

Zinc phosphodiesterase, which has both exoribonuclease and endoribonuclease activities. This Proteus mirabilis (strain HI4320) protein is Ribonuclease BN.